Consider the following 421-residue polypeptide: Carboxypeptidase A4 (421 aa).

The N-terminal stretch at 1 to 16 is a signal peptide; the sequence is MRWILFIGALIGSSIC. Residues 17 to 113 constitute a propeptide, activation peptide; sequence GQEKFFGDQV…EMQHNEGQER (97 aa). Residues Pro69, Val71, Asn119, Tyr123, His124, Ser125, Glu127, and Phe163 each coordinate a protein. The Peptidase M14 domain maps to 122–416; the sequence is AYHSLEAIYH…LGLKTIMEHV (295 aa). The Zn(2+) site is built by His181 and Glu184. The a protein site is built by Arg196, Lys197, and Ser248. An intrachain disulfide couples Cys250 to Cys273. Residue Asn260 is glycosylated (N-linked (GlcNAc...) asparagine). Asp270 is a binding site for a protein. His308 is a binding site for Zn(2+). Glu382 (proton donor/acceptor) is an active-site residue.

It belongs to the peptidase M14 family. Monomer. Interacts with LXN. Requires Zn(2+) as cofactor. Fetal expression in the adrenal gland, brain, heart, intestine, kidney, liver and lung. Except for fetal brain that shows no imprinting, expression was found preferentially from the maternal allele.

Its subcellular location is the secreted. Its activity is regulated as follows. Inhibited by interaction with the metallocarboxypeptidase inhibitor (MCPI) from N.versicolor that binds to the catalytic zinc ion. Also inhibited by interaction with the S.magnifica carboxypeptidase inhibitor SmCI that penetrates the active site groove and inhibits activity by emulating a C-terminal substrate. Additionally inhibited by a carboxypeptidase inhibitor from H.medicinalis (leech) and R.bursa (tick). In terms of biological role, metalloprotease that cleaves hydrophobic C-terminal residues with a preference for -Phe, -Leu, -Ile, -Met, -Tyr and -Val. May function in peptide hormone and/or neuropeptide catabolism. The chain is Carboxypeptidase A4 (CPA4) from Homo sapiens (Human).